The following is a 128-amino-acid chain: MEVVNAIGRRKAAVARVFVSEGTGKITINKRELEKYFPSSILQFIVKQPLAKLNVAEQYDIKINLDGGGFKGQSEAARLAISRALIKINPEDKAVLRAEGFVTRDPRAVERKKPGRPKARKRFQFSKR.

The interval 107 to 128 (RAVERKKPGRPKARKRFQFSKR) is disordered. Over residues 113–128 (KPGRPKARKRFQFSKR) the composition is skewed to basic residues.

It belongs to the universal ribosomal protein uS9 family.

This chain is Small ribosomal subunit protein uS9, found in Parabacteroides distasonis (strain ATCC 8503 / DSM 20701 / CIP 104284 / JCM 5825 / NCTC 11152).